We begin with the raw amino-acid sequence, 144 residues long: Large ribosomal subunit protein uL16 (144 aa).

It belongs to the universal ribosomal protein uL16 family. In terms of assembly, part of the 50S ribosomal subunit.

Its function is as follows. Binds 23S rRNA and is also seen to make contacts with the A and possibly P site tRNAs. This chain is Large ribosomal subunit protein uL16, found in Bacillus pumilus (strain SAFR-032).